Here is a 338-residue protein sequence, read N- to C-terminus: RNA 3'-terminal phosphate cyclase (338 aa).

ATP is bound by residues Q103 and 283-287; that span reads YLADQ. The Tele-AMP-histidine intermediate role is filled by H308.

Belongs to the RNA 3'-terminal cyclase family. Type 1 subfamily.

It localises to the cytoplasm. The enzyme catalyses a 3'-end 3'-phospho-ribonucleotide-RNA + ATP = a 3'-end 2',3'-cyclophospho-ribonucleotide-RNA + AMP + diphosphate. In terms of biological role, catalyzes the conversion of 3'-phosphate to a 2',3'-cyclic phosphodiester at the end of RNA. The mechanism of action of the enzyme occurs in 3 steps: (A) adenylation of the enzyme by ATP; (B) transfer of adenylate to an RNA-N3'P to produce RNA-N3'PP5'A; (C) and attack of the adjacent 2'-hydroxyl on the 3'-phosphorus in the diester linkage to produce the cyclic end product. The biological role of this enzyme is unknown but it is likely to function in some aspects of cellular RNA processing. This is RNA 3'-terminal phosphate cyclase from Shigella sonnei (strain Ss046).